The primary structure comprises 142 residues: MDLYELLEPTLAGLGYELVDLERSPGGKLLRIFIDKPGGVNVDDCVTVSNHLSRFLAVENVDYDRLEVSSPGLDRPLKKTADFIRFAGESVKLRLRVALQGQRNFVGILREVKDGILKLEVDGKMLDLELTNLEKVRLVPKL.

This sequence belongs to the RimP family.

The protein localises to the cytoplasm. In terms of biological role, required for maturation of 30S ribosomal subunits. In Nitrosospira multiformis (strain ATCC 25196 / NCIMB 11849 / C 71), this protein is Ribosome maturation factor RimP.